We begin with the raw amino-acid sequence, 245 residues long: Carbohydrate deacetylase (245 aa).

Mg(2+)-binding residues include histidine 59 and histidine 125.

Belongs to the YdjC deacetylase family. As to quaternary structure, homodimer. The cofactor is Mg(2+).

Functionally, probably catalyzes the deacetylation of acetylated carbohydrates an important step in the degradation of oligosaccharides. In Listeria welshimeri serovar 6b (strain ATCC 35897 / DSM 20650 / CCUG 15529 / CIP 8149 / NCTC 11857 / SLCC 5334 / V8), this protein is Carbohydrate deacetylase.